Here is a 328-residue protein sequence, read N- to C-terminus: Gonadotropin-releasing hormone receptor (328 aa).

Topologically, residues 1–38 (MANSASPEQNQNHCSAINSSILLTQGNLPTLTLSGKIR) are extracellular. An N-linked (GlcNAc...) asparagine glycan is attached at N18. Residues 39–58 (VTVTFFLFLLSTAFNASFLL) traverse the membrane as a helical segment. Residues 59–77 (KLQKWTQRKEKGKKLSRMK) are Cytoplasmic-facing. Residues 78 to 97 (VLLKHLTLANLLETLIVMPL) form a helical membrane-spanning segment. The Extracellular portion of the chain corresponds to 98-115 (DGMWNITVQWYAGEFLCK). N-linked (GlcNAc...) asparagine glycosylation occurs at N102. A disulfide bridge links C114 with C196. Residues 116 to 137 (VLSYLKLFSMYAPAFMMVVISL) traverse the membrane as a helical segment. The Cytoplasmic segment spans residues 138-164 (DRSLAITRPLAVKSNSRLGRFMIGLAW). Residues 165 to 184 (LLSSIFAGPQLYIFRMIHLA) form a helical membrane-spanning segment. The Extracellular portion of the chain corresponds to 185–212 (DSSGQTEGFSQCVTHGSFPQWWHQAFYN). A helical membrane pass occupies residues 213 to 232 (FFTFSCLFIIPLLIMLICNA). Topologically, residues 233–281 (KIMFTLTRVLQQDPHNLQLNQSKNNIPRARLRTLKMTVAFAASFIVCWT) are cytoplasmic. A helical transmembrane segment spans residues 282–300 (PYYVLGIWYWFDPEMVNRV). At 301–306 (SDPVNH) the chain is on the extracellular side. Residues 307–326 (FFFLFAFLNPCFDPLIYGYF) form a helical membrane-spanning segment. Residues 327 to 328 (SL) lie on the Cytoplasmic side of the membrane.

Belongs to the G-protein coupled receptor 1 family. Pituitary gland.

It localises to the cell membrane. In terms of biological role, receptor for gonadotropin releasing hormone (GnRH) that mediates the action of GnRH to stimulate the secretion of the gonadotropic hormones luteinizing hormone (LH) and follicle-stimulating hormone (FSH). This receptor mediates its action by association with G-proteins that activate a phosphatidylinositol-calcium second messenger system. The sequence is that of Gonadotropin-releasing hormone receptor (GNRHR) from Sus scrofa (Pig).